A 329-amino-acid chain; its full sequence is Biotin synthase (329 aa).

One can recognise a Radical SAM core domain in the interval 38-262 (NTIQVSTLLS…IMPHSYIRLS (225 aa)). 3 residues coordinate [4Fe-4S] cluster: Cys-53, Cys-57, and Cys-60. Residues Cys-97, Cys-128, Cys-188, and Arg-260 each coordinate [2Fe-2S] cluster.

Belongs to the radical SAM superfamily. Biotin synthase family. Homodimer. [4Fe-4S] cluster is required as a cofactor. The cofactor is [2Fe-2S] cluster.

It carries out the reaction (4R,5S)-dethiobiotin + (sulfur carrier)-SH + 2 reduced [2Fe-2S]-[ferredoxin] + 2 S-adenosyl-L-methionine = (sulfur carrier)-H + biotin + 2 5'-deoxyadenosine + 2 L-methionine + 2 oxidized [2Fe-2S]-[ferredoxin]. The protein operates within cofactor biosynthesis; biotin biosynthesis; biotin from 7,8-diaminononanoate: step 2/2. Functionally, catalyzes the conversion of dethiobiotin (DTB) to biotin by the insertion of a sulfur atom into dethiobiotin via a radical-based mechanism. The sequence is that of Biotin synthase from Acinetobacter baumannii (strain ACICU).